Reading from the N-terminus, the 291-residue chain is Deaminated glutathione amidase (291 aa).

The CN hydrolase domain occupies 13–268 (KRIGLGQITS…NDIAFVDIDL (256 aa)). Residue glutamate 52 is the Proton acceptor of the active site. Lysine 130 (proton donor) is an active-site residue. Cysteine 172 serves as the catalytic Nucleophile.

Belongs to the carbon-nitrogen hydrolase superfamily. NIT1/NIT2 family.

The catalysed reaction is N-(4-oxoglutaryl)-L-cysteinylglycine + H2O = L-cysteinylglycine + 2-oxoglutarate. Functionally, catalyzes the hydrolysis of the amide bond in N-(4-oxoglutarate)-L-cysteinylglycine (deaminated glutathione), a metabolite repair reaction to dispose of the harmful deaminated glutathione. This Dictyostelium discoideum (Social amoeba) protein is Deaminated glutathione amidase (nit1-1).